Reading from the N-terminus, the 339-residue chain is tRNA N6-adenosine threonylcarbamoyltransferase (339 aa).

The Fe cation site is built by H107 and H111. Substrate-binding positions include 129-133, D162, G175, and N279; that span reads LVSGG. D307 contacts Fe cation.

This sequence belongs to the KAE1 / TsaD family. Fe(2+) is required as a cofactor.

It localises to the cytoplasm. It carries out the reaction L-threonylcarbamoyladenylate + adenosine(37) in tRNA = N(6)-L-threonylcarbamoyladenosine(37) in tRNA + AMP + H(+). In terms of biological role, required for the formation of a threonylcarbamoyl group on adenosine at position 37 (t(6)A37) in tRNAs that read codons beginning with adenine. Is involved in the transfer of the threonylcarbamoyl moiety of threonylcarbamoyl-AMP (TC-AMP) to the N6 group of A37, together with TsaE and TsaB. TsaD likely plays a direct catalytic role in this reaction. The polypeptide is tRNA N6-adenosine threonylcarbamoyltransferase (Campylobacter curvus (strain 525.92)).